We begin with the raw amino-acid sequence, 446 residues long: Glycogen synthase (446 aa).

Arg-15 is a binding site for ADP-alpha-D-glucose.

Belongs to the glycosyltransferase 1 family. Bacterial/plant glycogen synthase subfamily.

The enzyme catalyses [(1-&gt;4)-alpha-D-glucosyl](n) + ADP-alpha-D-glucose = [(1-&gt;4)-alpha-D-glucosyl](n+1) + ADP + H(+). It participates in glycan biosynthesis; glycogen biosynthesis. Its function is as follows. Synthesizes alpha-1,4-glucan chains using ADP-glucose. The polypeptide is Glycogen synthase (Deinococcus deserti (strain DSM 17065 / CIP 109153 / LMG 22923 / VCD115)).